Consider the following 206-residue polypeptide: Small ribosomal subunit protein uS4 (206 aa).

An S4 RNA-binding domain is found at 96-156 (GRLDNVVYRM…EKSKKQARIK (61 aa)).

This sequence belongs to the universal ribosomal protein uS4 family. As to quaternary structure, part of the 30S ribosomal subunit. Contacts protein S5. The interaction surface between S4 and S5 is involved in control of translational fidelity.

In terms of biological role, one of the primary rRNA binding proteins, it binds directly to 16S rRNA where it nucleates assembly of the body of the 30S subunit. Its function is as follows. With S5 and S12 plays an important role in translational accuracy. The sequence is that of Small ribosomal subunit protein uS4 from Pasteurella multocida (strain Pm70).